Reading from the N-terminus, the 97-residue chain is Co-chaperonin GroES (97 aa).

This sequence belongs to the GroES chaperonin family. Heptamer of 7 subunits arranged in a ring. Interacts with the chaperonin GroEL.

It is found in the cytoplasm. Together with the chaperonin GroEL, plays an essential role in assisting protein folding. The GroEL-GroES system forms a nano-cage that allows encapsulation of the non-native substrate proteins and provides a physical environment optimized to promote and accelerate protein folding. GroES binds to the apical surface of the GroEL ring, thereby capping the opening of the GroEL channel. The sequence is that of Co-chaperonin GroES from Elusimicrobium minutum (strain Pei191).